A 338-amino-acid polypeptide reads, in one-letter code: Ketol-acid reductoisomerase (NADP(+)) (338 aa).

In terms of domain architecture, KARI N-terminal Rossmann spans 1-181; sequence MQVYYDKDCD…GGGRTGIIET (181 aa). Residues 24 to 27, R47, S50, S52, and 82 to 85 each bind NADP(+); these read YGSQ and DEFQ. Residue H107 is part of the active site. G133 contributes to the NADP(+) binding site. Residues 182–327 enclose the KARI C-terminal knotted domain; the sequence is TFKDETETDL…EKLRAMMPWI (146 aa). Mg(2+) contacts are provided by D190, E194, E226, and E230. Residue S251 coordinates substrate.

This sequence belongs to the ketol-acid reductoisomerase family. It depends on Mg(2+) as a cofactor.

The enzyme catalyses (2R)-2,3-dihydroxy-3-methylbutanoate + NADP(+) = (2S)-2-acetolactate + NADPH + H(+). It carries out the reaction (2R,3R)-2,3-dihydroxy-3-methylpentanoate + NADP(+) = (S)-2-ethyl-2-hydroxy-3-oxobutanoate + NADPH + H(+). Its pathway is amino-acid biosynthesis; L-isoleucine biosynthesis; L-isoleucine from 2-oxobutanoate: step 2/4. It participates in amino-acid biosynthesis; L-valine biosynthesis; L-valine from pyruvate: step 2/4. In terms of biological role, involved in the biosynthesis of branched-chain amino acids (BCAA). Catalyzes an alkyl-migration followed by a ketol-acid reduction of (S)-2-acetolactate (S2AL) to yield (R)-2,3-dihydroxy-isovalerate. In the isomerase reaction, S2AL is rearranged via a Mg-dependent methyl migration to produce 3-hydroxy-3-methyl-2-ketobutyrate (HMKB). In the reductase reaction, this 2-ketoacid undergoes a metal-dependent reduction by NADPH to yield (R)-2,3-dihydroxy-isovalerate. This chain is Ketol-acid reductoisomerase (NADP(+)), found in Teredinibacter turnerae (strain ATCC 39867 / T7901).